A 199-amino-acid chain; its full sequence is Holliday junction branch migration complex subunit RuvA (199 aa).

The domain I stretch occupies residues 1 to 63 (MIAYIEGKLA…EDAHTLFGFA (63 aa)). The domain II stretch occupies residues 64 to 142 (DLMEKEMFLH…KDALLAGSDS (79 aa)). Positions 143–151 (KQNFSVSHN) are flexible linker. Positions 151 to 199 (NSIRSEALTALITLGFTKTVAEKNLDLILKGNSNSFTLEDLIKQALKMS) are domain III.

It belongs to the RuvA family. In terms of assembly, homotetramer. Forms an RuvA(8)-RuvB(12)-Holliday junction (HJ) complex. HJ DNA is sandwiched between 2 RuvA tetramers; dsDNA enters through RuvA and exits via RuvB. An RuvB hexamer assembles on each DNA strand where it exits the tetramer. Each RuvB hexamer is contacted by two RuvA subunits (via domain III) on 2 adjacent RuvB subunits; this complex drives branch migration. In the full resolvosome a probable DNA-RuvA(4)-RuvB(12)-RuvC(2) complex forms which resolves the HJ.

The protein resides in the cytoplasm. In terms of biological role, the RuvA-RuvB-RuvC complex processes Holliday junction (HJ) DNA during genetic recombination and DNA repair, while the RuvA-RuvB complex plays an important role in the rescue of blocked DNA replication forks via replication fork reversal (RFR). RuvA specifically binds to HJ cruciform DNA, conferring on it an open structure. The RuvB hexamer acts as an ATP-dependent pump, pulling dsDNA into and through the RuvAB complex. HJ branch migration allows RuvC to scan DNA until it finds its consensus sequence, where it cleaves and resolves the cruciform DNA. The polypeptide is Holliday junction branch migration complex subunit RuvA (Cytophaga hutchinsonii (strain ATCC 33406 / DSM 1761 / CIP 103989 / NBRC 15051 / NCIMB 9469 / D465)).